Here is a 129-residue protein sequence, read N- to C-terminus: Large ribosomal subunit protein bL17 (129 aa).

This sequence belongs to the bacterial ribosomal protein bL17 family. As to quaternary structure, part of the 50S ribosomal subunit. Contacts protein L32.

This is Large ribosomal subunit protein bL17 from Acidovorax ebreus (strain TPSY) (Diaphorobacter sp. (strain TPSY)).